Consider the following 142-residue polypeptide: Ribosome maturation factor RimP (142 aa).

It belongs to the RimP family.

It localises to the cytoplasm. Functionally, required for maturation of 30S ribosomal subunits. The polypeptide is Ribosome maturation factor RimP (Wolinella succinogenes (strain ATCC 29543 / DSM 1740 / CCUG 13145 / JCM 31913 / LMG 7466 / NCTC 11488 / FDC 602W) (Vibrio succinogenes)).